The sequence spans 196 residues: ATP-dependent Clp protease proteolytic subunit (196 aa).

Ser-101 acts as the Nucleophile in catalysis. His-126 is a catalytic residue.

Belongs to the peptidase S14 family. In terms of assembly, component of the chloroplastic Clp protease core complex.

Its subcellular location is the plastid. The protein resides in the chloroplast stroma. The enzyme catalyses Hydrolysis of proteins to small peptides in the presence of ATP and magnesium. alpha-casein is the usual test substrate. In the absence of ATP, only oligopeptides shorter than five residues are hydrolyzed (such as succinyl-Leu-Tyr-|-NHMec, and Leu-Tyr-Leu-|-Tyr-Trp, in which cleavage of the -Tyr-|-Leu- and -Tyr-|-Trp bonds also occurs).. Its function is as follows. Cleaves peptides in various proteins in a process that requires ATP hydrolysis. Has a chymotrypsin-like activity. Plays a major role in the degradation of misfolded proteins. This Pleurastrum terricola (Filamentous green alga) protein is ATP-dependent Clp protease proteolytic subunit.